Reading from the N-terminus, the 76-residue chain is cAMP-dependent protein kinase inhibitor alpha (76 aa).

T2 carries the post-translational modification N-acetylthreonine. Residues 49-76 form a disordered region; it reads KTEGEEDAQRNSTEQSGEAQGEAAKSES.

The protein belongs to the PKI family.

Its function is as follows. Extremely potent competitive inhibitor of cAMP-dependent protein kinase activity, this protein interacts with the catalytic subunit of the enzyme after the cAMP-induced dissociation of its regulatory chains. The protein is cAMP-dependent protein kinase inhibitor alpha (PKIA) of Bos taurus (Bovine).